An 87-amino-acid chain; its full sequence is Omega-lycotoxin-Am1a (87 aa).

The N-terminal stretch at 1–17 (MKLSIFFVLFFIAIAYC) is a signal peptide. Residues 18–40 (QPEFLDDEEDEVEETLPVAEEGR) constitute a propeptide that is removed on maturation. Intrachain disulfides connect C44-C59, C51-C64, C58-C84, and C66-C82.

It belongs to the neurotoxin omega-lctx family. In terms of tissue distribution, expressed by the venom gland.

The protein localises to the secreted. Its function is as follows. Modulates Cav2.1/CACNA1A voltage-gated calcium channels (P/Q-type currents) in rat cerebellar Purkinje cells and hippocampal CA1-CA3 neurons. At saturating concentrations (&gt;10 nM) decelerates activation kinetics and slightly increases peak amplitude without affecting deactivation kinetics. In vivo, does not cause death when intravenously injected into mice. In rat models, through its activity on Cav2.1/CACNA1A, has an ameliorative effect on memory defects provoked by hyperstimulation of N-methyl-D-aspartate receptors (NMDARs) in the hippocampus. This is Omega-lycotoxin-Am1a from Alopecosa marikovskyi (Wolf spider).